A 271-amino-acid polypeptide reads, in one-letter code: Phosphate import ATP-binding protein PstB (271 aa).

The ABC transporter domain occupies Met24–Ile266. An ATP-binding site is contributed by Gly56–Ser63.

This sequence belongs to the ABC transporter superfamily. Phosphate importer (TC 3.A.1.7) family. In terms of assembly, the complex is composed of two ATP-binding proteins (PstB), two transmembrane proteins (PstC and PstA) and a solute-binding protein (PstS).

Its subcellular location is the cell inner membrane. It carries out the reaction phosphate(out) + ATP + H2O = ADP + 2 phosphate(in) + H(+). Its function is as follows. Part of the ABC transporter complex PstSACB involved in phosphate import. Responsible for energy coupling to the transport system. The protein is Phosphate import ATP-binding protein PstB of Rhizobium etli (strain ATCC 51251 / DSM 11541 / JCM 21823 / NBRC 15573 / CFN 42).